A 309-amino-acid polypeptide reads, in one-letter code: MASFVMGYFLLFAVAFMCLDARTDKTQDYTSFQYHKGALLTGDVSINLIWYGKFKPSQRAIVTDFVASLSSSRRSTMAQNPSVATWWKTVEKYYQFRKMTTTRGLSLSLGEQILDQGYSMGKSLTEKNLKDLAAKGGQSYAVNVVLTSADVTVQGFCMNRCGSHGTGSGSGKKGSRFAYIWVGNSETQCPGQCAWPFHAPVYGPQSPPLVAPNNDVGLDGMVINLASLMAATATNPFGDGYYQGPKTAPLEAGSACTGVYGKGSYPGYAGELLVDATTGGSYNVKGLNGRKYLLPALFDPKTDSCSTLF.

Positions methionine 1–threonine 23 are cleaved as a signal peptide.

This sequence belongs to the EXORDIUM family.

It localises to the secreted. The protein resides in the extracellular space. The protein localises to the apoplast. Its function is as follows. May play a role in a brassinosteroid-dependent regulatory pathway that controls growth and development under low carbon and energy availability. The sequence is that of Protein EXORDIUM-like 1 (EXL1) from Arabidopsis thaliana (Mouse-ear cress).